The chain runs to 289 residues: CCR4-associated factor 16 (289 aa).

Positions 7-249 (IEVRNLTYKF…SEVVNAKVNG (243 aa)) constitute an ABC transporter domain. 41 to 48 (GANGAGKS) contacts ATP.

The protein belongs to the ABC transporter superfamily. Interacts with CCR4 and SSN2.

The protein localises to the cytoplasm. It is found in the nucleus. The sequence is that of CCR4-associated factor 16 (CAF16) from Saccharomyces cerevisiae (strain ATCC 204508 / S288c) (Baker's yeast).